The chain runs to 223 residues: Serine/threonine/tyrosine-interacting protein A (223 aa).

A Tyrosine-protein phosphatase domain is found at 28–176 (EMQEILPGLF…LQEYEAIYLA (149 aa)).

Belongs to the protein-tyrosine phosphatase family. Non-receptor class subfamily.

Its function is as follows. Catalytically inactive phosphatase. In Xenopus laevis (African clawed frog), this protein is Serine/threonine/tyrosine-interacting protein A (styx-a).